Consider the following 147-residue polypeptide: Methylmalonyl-CoA mutase homolog (147 aa).

To methylmalonyl-CoA mutase.

This Alkalihalophilus pseudofirmus (strain ATCC BAA-2126 / JCM 17055 / OF4) (Bacillus pseudofirmus) protein is Methylmalonyl-CoA mutase homolog.